Here is a 132-residue protein sequence, read N- to C-terminus: MALTLDIVTPEKRVLSVQVDEVRAPGVQGGFGVRLNHEPFMTALEPGRLTYVEGGREHHYAVGGGFLQVADNRVIVLADTAEAAGEIDVDRARKAFEDAQNRLLQLTEQDEGHSAESARVRRAAARLTVAGR.

Belongs to the ATPase epsilon chain family. As to quaternary structure, F-type ATPases have 2 components, CF(1) - the catalytic core - and CF(0) - the membrane proton channel. CF(1) has five subunits: alpha(3), beta(3), gamma(1), delta(1), epsilon(1). CF(0) has three main subunits: a, b and c.

The protein localises to the cell inner membrane. Its function is as follows. Produces ATP from ADP in the presence of a proton gradient across the membrane. This Anaeromyxobacter dehalogenans (strain 2CP-C) protein is ATP synthase epsilon chain.